The primary structure comprises 122 residues: Small ribosomal subunit protein uS12c (122 aa).

This sequence belongs to the universal ribosomal protein uS12 family. In terms of assembly, part of the 30S ribosomal subunit.

It is found in the plastid. The protein resides in the chloroplast. Its function is as follows. With S4 and S5 plays an important role in translational accuracy. Located at the interface of the 30S and 50S subunits. The chain is Small ribosomal subunit protein uS12c (rps12) from Cyanidioschyzon merolae (strain NIES-3377 / 10D) (Unicellular red alga).